The primary structure comprises 276 residues: Shikimate dehydrogenase (NADP(+)) (276 aa).

Residues serine 15–serine 17 and threonine 63 each bind shikimate. The active-site Proton acceptor is the lysine 67. Aspartate 79 is a binding site for NADP(+). The shikimate site is built by asparagine 88 and aspartate 103. Residues glycine 130–alanine 134, asparagine 154–arginine 159, and isoleucine 217 contribute to the NADP(+) site. Tyrosine 219 is a binding site for shikimate. Residue glycine 240 coordinates NADP(+).

The protein belongs to the shikimate dehydrogenase family. As to quaternary structure, homodimer.

It catalyses the reaction shikimate + NADP(+) = 3-dehydroshikimate + NADPH + H(+). It functions in the pathway metabolic intermediate biosynthesis; chorismate biosynthesis; chorismate from D-erythrose 4-phosphate and phosphoenolpyruvate: step 4/7. Its function is as follows. Involved in the biosynthesis of the chorismate, which leads to the biosynthesis of aromatic amino acids. Catalyzes the reversible NADPH linked reduction of 3-dehydroshikimate (DHSA) to yield shikimate (SA). The chain is Shikimate dehydrogenase (NADP(+)) from Oceanobacillus iheyensis (strain DSM 14371 / CIP 107618 / JCM 11309 / KCTC 3954 / HTE831).